The sequence spans 486 residues: Malonate-semialdehyde dehydrogenase (486 aa).

NAD(+) is bound by residues Phe154, Lys178, Glu181, Arg182, and Ser231. Cys286 acts as the Nucleophile in catalysis. Glu386 lines the NAD(+) pocket.

The protein belongs to the aldehyde dehydrogenase family. IolA subfamily. Homotetramer.

It carries out the reaction 3-oxopropanoate + NAD(+) + CoA + H2O = hydrogencarbonate + acetyl-CoA + NADH + H(+). The enzyme catalyses 2-methyl-3-oxopropanoate + NAD(+) + CoA + H2O = propanoyl-CoA + hydrogencarbonate + NADH + H(+). The protein operates within polyol metabolism; myo-inositol degradation into acetyl-CoA; acetyl-CoA from myo-inositol: step 7/7. Functionally, catalyzes the oxidation of malonate semialdehyde (MSA) and methylmalonate semialdehyde (MMSA) into acetyl-CoA and propanoyl-CoA, respectively. Is involved in a myo-inositol catabolic pathway. Bicarbonate, and not CO2, is the end-product of the enzymatic reaction. In Bacillus cereus (strain ATCC 10987 / NRS 248), this protein is Malonate-semialdehyde dehydrogenase.